Here is a 484-residue protein sequence, read N- to C-terminus: Ribosomal RNA small subunit methyltransferase F (484 aa).

S-adenosyl-L-methionine contacts are provided by residues 126–132, glutamate 150, aspartate 177, and aspartate 195; that span reads AAAPGSK. The active-site Nucleophile is the cysteine 248.

This sequence belongs to the class I-like SAM-binding methyltransferase superfamily. RsmB/NOP family.

It localises to the cytoplasm. It carries out the reaction cytidine(1407) in 16S rRNA + S-adenosyl-L-methionine = 5-methylcytidine(1407) in 16S rRNA + S-adenosyl-L-homocysteine + H(+). In terms of biological role, specifically methylates the cytosine at position 1407 (m5C1407) of 16S rRNA. This chain is Ribosomal RNA small subunit methyltransferase F, found in Pectobacterium carotovorum subsp. carotovorum (strain PC1).